Here is a 201-residue protein sequence, read N- to C-terminus: Prostamide/prostaglandin F synthase (201 aa).

Belongs to the peroxiredoxin-like PRXL2 family. Prostamide/prostaglandin F synthase subfamily.

It is found in the cytoplasm. Its subcellular location is the cytosol. The enzyme catalyses prostaglandin H2 + [thioredoxin]-dithiol = prostaglandin F2alpha + [thioredoxin]-disulfide. It catalyses the reaction prostamide F2alpha + [thioredoxin]-disulfide = prostamide H2 + [thioredoxin]-dithiol. In terms of biological role, catalyzes the reduction of prostaglandin-ethanolamide H(2) (prostamide H(2)) to prostamide F(2alpha) with NADPH as proton donor. Also able to reduce prostaglandin H(2) to prostaglandin F(2alpha). This chain is Prostamide/prostaglandin F synthase (prxl2b), found in Danio rerio (Zebrafish).